Here is a 91-residue protein sequence, read N- to C-terminus: Early E3B 10.4 kDa protein (91 aa).

Positions 1–22 (MIPRVFILLTLVALFCACSTLA) are cleaved as a signal peptide. Topologically, residues 23–34 (AVSHIEVDCIPA) are lumenal. The helical transmembrane segment at 35–60 (FTVYLLYGFVTLTLICSLITVVIAFI) threads the bilayer. The Cytoplasmic portion of the chain corresponds to 61 to 91 (QCIDWVCVRFAYLRHHPQYRDRTIAELLRIL).

Belongs to the adenoviridae E3B family.

It is found in the host endoplasmic reticulum membrane. Its function is as follows. Down-regulates the EGF receptor. This is Early E3B 10.4 kDa protein from Homo sapiens (Human).